The chain runs to 370 residues: GTPase Obg (370 aa).

One can recognise an Obg domain in the interval 1–159; it reads MKFVDEAYID…KKLKLELRVL (159 aa). An OBG-type G domain is found at 160–333; the sequence is ADVGLLGMPN…LVQAIYQHVA (174 aa). Residues 166-173, 191-195, 213-216, 283-286, and 314-316 each bind GTP; these read GMPNAGKS, FTTLH, DVPG, NKLD, and SAL. Mg(2+)-binding residues include S173 and T193. The tract at residues 346 to 370 is disordered; sequence FAEPEADESDDEPRFAPQADDPRFR.

This sequence belongs to the TRAFAC class OBG-HflX-like GTPase superfamily. OBG GTPase family. Monomer. Mg(2+) serves as cofactor.

It localises to the cytoplasm. Its function is as follows. An essential GTPase which binds GTP, GDP and possibly (p)ppGpp with moderate affinity, with high nucleotide exchange rates and a fairly low GTP hydrolysis rate. Plays a role in control of the cell cycle, stress response, ribosome biogenesis and in those bacteria that undergo differentiation, in morphogenesis control. The polypeptide is GTPase Obg (Methylibium petroleiphilum (strain ATCC BAA-1232 / LMG 22953 / PM1)).